We begin with the raw amino-acid sequence, 198 residues long: Na(+)-translocating NADH-quinone reductase subunit E (198 aa).

6 helical membrane-spanning segments follow: residues 11–31, 35–55, 77–97, 109–129, 140–160, and 176–196; these read AVFVENMALAFFLGMCTFLAV, VSTAFGLGIAVTVVLGISVPA, FLNFITFIGVIAAIVQVLEMI, LGIFLPLITVNCAIFGGVSFM, IVYGFGSGIGWMLAIVALAGI, and LGITFITTGLMALGFMSFSGV.

Belongs to the NqrDE/RnfAE family. As to quaternary structure, composed of six subunits; NqrA, NqrB, NqrC, NqrD, NqrE and NqrF.

It is found in the cell inner membrane. The enzyme catalyses a ubiquinone + n Na(+)(in) + NADH + H(+) = a ubiquinol + n Na(+)(out) + NAD(+). Functionally, NQR complex catalyzes the reduction of ubiquinone-1 to ubiquinol by two successive reactions, coupled with the transport of Na(+) ions from the cytoplasm to the periplasm. NqrA to NqrE are probably involved in the second step, the conversion of ubisemiquinone to ubiquinol. This chain is Na(+)-translocating NADH-quinone reductase subunit E, found in Yersinia enterocolitica serotype O:8 / biotype 1B (strain NCTC 13174 / 8081).